The following is a 675-amino-acid chain: NADH-quinone oxidoreductase subunit G (675 aa).

In terms of domain architecture, 2Fe-2S ferredoxin-type spans 1–78 (MIKLIIDGSE…GMVIHTDTPM (78 aa)). The [2Fe-2S] cluster site is built by cysteine 34, cysteine 45, cysteine 48, and cysteine 62. Positions 78-117 (MVKKAREGVMEFLLINHPLDCPICDQGGECDLQDQAFRYG) constitute a 4Fe-4S His(Cys)3-ligated-type domain. Positions 94, 98, 101, 107, 146, 149, 152, and 196 each coordinate [4Fe-4S] cluster. Positions 215 to 271 (LKHTASIGVHDAEGSNIRIDSRADEIMRILPRVNEAINEEWLSDKNRFCYDGLKYQR) constitute a 4Fe-4S Mo/W bis-MGD-type domain.

This sequence belongs to the complex I 75 kDa subunit family. The cofactor is [2Fe-2S] cluster. Requires [4Fe-4S] cluster as cofactor.

It catalyses the reaction a quinone + NADH + 5 H(+)(in) = a quinol + NAD(+) + 4 H(+)(out). In terms of biological role, NDH-1 shuttles electrons from NADH, via FMN and iron-sulfur (Fe-S) centers, to quinones in the respiratory chain. Couples the redox reaction to proton translocation (for every two electrons transferred, four hydrogen ions are translocated across the cytoplasmic membrane), and thus conserves the redox energy in a proton gradient. This chain is NADH-quinone oxidoreductase subunit G (nuoG), found in Rickettsia prowazekii (strain Madrid E).